A 100-amino-acid polypeptide reads, in one-letter code: Replication restart protein PriB (100 aa).

In terms of domain architecture, SSB spans 1 to 100; that stretch reads MTNRMELSGT…VLHADDIIHI (100 aa).

This sequence belongs to the PriB family. In terms of assembly, homodimer. Interacts with PriA and DnaT. Component of the replication restart primosome. Primosome assembly occurs via a 'hand-off' mechanism. PriA binds to replication forks, subsequently PriB then DnaT bind; DnaT then displaces ssDNA to generate the helicase loading substrate.

Involved in the restart of stalled replication forks, which reloads the replicative helicase on sites other than the origin of replication; the PriA-PriB pathway is the major replication restart pathway. During primosome assembly it facilitates complex formation between PriA and DnaT on DNA; stabilizes PriA on DNA. Stimulates the DNA unwinding activity of PriA helicase. The sequence is that of Replication restart protein PriB from Vibrio vulnificus (strain CMCP6).